A 439-amino-acid chain; its full sequence is Glutamyl-tRNA(Gln) amidotransferase subunit D (439 aa).

One can recognise an Asparaginase/glutaminase domain in the interval 88 to 419 (GKVKIISTGG…EEVKRIMLTN (332 aa)). Residues threonine 98, threonine 174, aspartate 175, and lysine 253 contribute to the active site.

Belongs to the asparaginase 1 family. GatD subfamily. Heterodimer of GatD and GatE.

The enzyme catalyses L-glutamyl-tRNA(Gln) + L-glutamine + ATP + H2O = L-glutaminyl-tRNA(Gln) + L-glutamate + ADP + phosphate + H(+). Functionally, allows the formation of correctly charged Gln-tRNA(Gln) through the transamidation of misacylated Glu-tRNA(Gln) in organisms which lack glutaminyl-tRNA synthetase. The reaction takes place in the presence of glutamine and ATP through an activated gamma-phospho-Glu-tRNA(Gln). The GatDE system is specific for glutamate and does not act on aspartate. This chain is Glutamyl-tRNA(Gln) amidotransferase subunit D, found in Metallosphaera sedula (strain ATCC 51363 / DSM 5348 / JCM 9185 / NBRC 15509 / TH2).